The chain runs to 858 residues: Myosin-K heavy chain (858 aa).

The Myosin motor domain maps to 7-820 (SGVDDLVLVS…TIFVMEDLLM (814 aa)). Position 100-107 (100-107 (GESGAGKT)) interacts with ATP. The segment at 121–265 (SPNNSSGGGI…GGGYGGSSKT (145 aa)) is disordered. Composition is skewed to gly residues over residues 126–139 (SGGG…GNGG) and 157–182 (RGMG…SRGG). Positions 183–228 (GPPPTRGRGGPPPPIPQNRGAPPPVSNGGAPPPVARGPVAPPPTRG) are enriched in pro residues. The segment covering 233-245 (RGGGPANRGGRGG) has biased composition (gly residues). The interval 712–722 (PHYIRCIKPND) is actin-binding. Residues 821–858 (QKIDPIGYKNRVQAYKENEKLAQMKQGKHSMKQKCLIQ) are tail.

The protein belongs to the TRAFAC class myosin-kinesin ATPase superfamily. Myosin family.

The protein localises to the cytoplasm. Its function is as follows. Myosins are actin-based motor molecules with ATPase activity. Involved in phagocytosis and motility, and in the maintenance and dynamics of cell cortex. This is Myosin-K heavy chain (myoK) from Dictyostelium discoideum (Social amoeba).